The sequence spans 620 residues: Chaperone protein HscA homolog (620 aa).

The protein belongs to the heat shock protein 70 family.

In terms of biological role, chaperone involved in the maturation of iron-sulfur cluster-containing proteins. Has a low intrinsic ATPase activity which is markedly stimulated by HscB. This is Chaperone protein HscA homolog from Acinetobacter baumannii (strain SDF).